A 190-amino-acid polypeptide reads, in one-letter code: UPF0301 protein PSPTO_5037 (190 aa).

It belongs to the UPF0301 (AlgH) family.

The chain is UPF0301 protein PSPTO_5037 from Pseudomonas syringae pv. tomato (strain ATCC BAA-871 / DC3000).